Here is a 335-residue protein sequence, read N- to C-terminus: MKNELEKVMAGRDMTENEMNMLANSIIQGELSDVQIASFLVALKMKGESASELTGLARALQKAAISIPTNLTNAMDNCGTGGDRSFSFNISTTAAFVLAAGGVNMAKHGNRSITSKSGSADVLEALGINLYLPAEKLAQVFDKVGLVFLFAQNLHPAMKYFTPVRRQLEIPTIMNLTGPLINPIPLDTQLLGTSRPDLLELTANVLKGLGRKRALVITGEGGMDEATPFGLNHYALLENGEVTLHKFRAADVGMSEVALNDIRGGEAPENSEILKNVLENCSSAFLETTVLNAGLGFYANGKVDSIKSGIELAREVIAQGAALEKLHELQAEQIG.

5-phospho-alpha-D-ribose 1-diphosphate is bound by residues G79, 82 to 83, S87, 89 to 92, 107 to 115, and S119; these read GD, NIST, and KHGNRSITS. G79 serves as a coordination point for anthranilate. Position 91 (S91) interacts with Mg(2+). N110 contributes to the anthranilate binding site. R165 provides a ligand contact to anthranilate. The Mg(2+) site is built by D224 and E225.

Belongs to the anthranilate phosphoribosyltransferase family. Homodimer. The cofactor is Mg(2+).

It carries out the reaction N-(5-phospho-beta-D-ribosyl)anthranilate + diphosphate = 5-phospho-alpha-D-ribose 1-diphosphate + anthranilate. Its pathway is amino-acid biosynthesis; L-tryptophan biosynthesis; L-tryptophan from chorismate: step 2/5. Catalyzes the transfer of the phosphoribosyl group of 5-phosphorylribose-1-pyrophosphate (PRPP) to anthranilate to yield N-(5'-phosphoribosyl)-anthranilate (PRA). This Lactococcus lactis subsp. cremoris (strain SK11) protein is Anthranilate phosphoribosyltransferase.